Reading from the N-terminus, the 198-residue chain is Ribosome maturation factor RimM (198 aa).

A PRC barrel domain is found at 92–168 (DDEYYHADLI…IELPAEIEGE (77 aa)). Residues 163–172 (AEIEGEDQDS) show a composition bias toward acidic residues. The disordered stretch occupies residues 163 to 198 (AEIEGEDQDSSDNAGSPEGDAAASNSARHPRESGDP).

It belongs to the RimM family. Binds ribosomal protein uS19.

It localises to the cytoplasm. In terms of biological role, an accessory protein needed during the final step in the assembly of 30S ribosomal subunit, possibly for assembly of the head region. Essential for efficient processing of 16S rRNA. May be needed both before and after RbfA during the maturation of 16S rRNA. It has affinity for free ribosomal 30S subunits but not for 70S ribosomes. In Bradyrhizobium sp. (strain BTAi1 / ATCC BAA-1182), this protein is Ribosome maturation factor RimM.